The primary structure comprises 82 residues: Large ribosomal subunit protein eL14 (82 aa).

It belongs to the eukaryotic ribosomal protein eL14 family.

The protein is Large ribosomal subunit protein eL14 of Pyrococcus abyssi (strain GE5 / Orsay).